A 260-amino-acid polypeptide reads, in one-letter code: Kallikrein-8 (260 aa).

The N-terminal stretch at 1-28 is a signal peptide; sequence MGRPPPCAIQPWILLLLFMGAWAGLTRA. Positions 29-32 are excised as a propeptide; sequence QGSK. The region spanning 33-257 is the Peptidase S1 domain; that stretch reads ILEGRECIPH…YTTWIKKTMD (225 aa). 6 cysteine pairs are disulfide-bonded: C39–C173, C58–C74, C145–C246, C152–C218, C184–C198, and C208–C233. Residue H73 is the Charge relay system of the active site. N-linked (GlcNAc...) asparagine glycosylation occurs at N110. Catalysis depends on D120, which acts as the Charge relay system. S212 (charge relay system) is an active-site residue.

Belongs to the peptidase S1 family. Kallikrein subfamily. Interacts with SPINK9. Expressed in the limbic system of mouse brain and is localized at highest concentration in pyramidal neurons of the hippocampal CA1-3 subfields. Also detected in spinal cord gray matter and in keratinized stratified epithelia of epidermis, hair, tongue, palate, nasal cavity, pharynges, esophagus and forestomach. In skin and mucus membranes, expressed in stratum spinosum and stratum granulosum. Expressed during estrus in vaginal epithelial cells but not stromal cells. Within the vaginal epithelium, expressed in prickle cells, granular cells and parakeratotic cells but not in basal cells. Not expressed in uterus. Expressed in the keratinocytes.

Its subcellular location is the secreted. The protein resides in the cytoplasm. The catalysed reaction is Cleavage of amide substrates following the basic amino acids Arg or Lys at the P1 position, with a preference for Arg over Lys.. Its activity is regulated as follows. Strongly inhibited by diisopropyl fluorophosphate, leupeptin and (4-amidinophenyl)methanesulfonyl 1-fluoride. In terms of biological role, serine protease which is capable of degrading a number of proteins such as casein, fibrinogen, kininogen, fibronectin and collagen type IV. Also cleaves L1CAM in response to increased neural activity. Induces neurite outgrowth and fasciculation of cultured hippocampal neurons. Plays a role in the formation and maturation of orphan and small synaptic boutons in the Schaffer-collateral pathway, regulates Schaffer-collateral long-term potentiation in the hippocampus and is required for memory acquisition and synaptic plasticity. Involved in skin desquamation and keratinocyte proliferation. Plays a role in the secondary phase of pathogenesis following spinal cord injury. This chain is Kallikrein-8 (Klk8), found in Mus musculus (Mouse).